Here is a 310-residue protein sequence, read N- to C-terminus: Homoserine kinase (310 aa).

91–101 (PIGSGLGSSAC) is a binding site for ATP.

It belongs to the GHMP kinase family. Homoserine kinase subfamily.

The protein resides in the cytoplasm. It carries out the reaction L-homoserine + ATP = O-phospho-L-homoserine + ADP + H(+). It functions in the pathway amino-acid biosynthesis; L-threonine biosynthesis; L-threonine from L-aspartate: step 4/5. Its function is as follows. Catalyzes the ATP-dependent phosphorylation of L-homoserine to L-homoserine phosphate. The polypeptide is Homoserine kinase (Escherichia coli O139:H28 (strain E24377A / ETEC)).